A 172-amino-acid polypeptide reads, in one-letter code: uncharacterized protein (172 aa).

Residues 1–148 (MANSQKVIDV…TIHDFFENGN (148 aa)) enclose the Ferritin-like diiron domain.

This is an uncharacterized protein from Ureaplasma urealyticum (Ureaplasma urealyticum biotype 2).